Here is a 304-residue protein sequence, read N- to C-terminus: Endonuclease III-like protein 1 (304 aa).

A mitochondrion-targeting transit peptide spans 1-22 (MTALSARMLTRSRSLGPGAGPR). Positions 1–72 (MTALSARMLT…SDSEKGEGAE (72 aa)) are disordered. Residues 23-42 (GCREEPGPLRRREAAAEARK) are compositionally biased toward basic and acidic residues. Positions 28–52 (PGPLRRREAAAEARKSHSPVKRPRK) match the Bipartite nuclear localization signal motif. The span at 43–55 (SHSPVKRPRKAQR) shows a compositional bias: basic residues. Residues Ser63 and Ser65 each carry the phosphoserine modification. In terms of domain architecture, HhH spans 191 to 215 (HYGGDIPASVAELVALPGVGPKMAH). Lys212 (nucleophile; for N-glycosylase activity) is an active-site residue. 4 residues coordinate [4Fe-4S] cluster: Cys282, Cys289, Cys292, and Cys298.

It belongs to the Nth/MutY family. In terms of assembly, interacts with YBX1. Interacts with ERCC5/XPG; the interaction stimulates NTHL1 activity and NTHL1 binding to its DNA substrate. [4Fe-4S] cluster serves as cofactor. In terms of processing, ubiquitinated by TRIM26; leading to proteasomal degradation. Widely expressed with highest levels in heart and lowest levels in lung and liver.

The protein localises to the nucleus. The protein resides in the mitochondrion. The catalysed reaction is 2'-deoxyribonucleotide-(2'-deoxyribose 5'-phosphate)-2'-deoxyribonucleotide-DNA = a 3'-end 2'-deoxyribonucleotide-(2,3-dehydro-2,3-deoxyribose 5'-phosphate)-DNA + a 5'-end 5'-phospho-2'-deoxyribonucleoside-DNA + H(+). With respect to regulation, APE1 displaces NTHL1 from the N-glycosylase-generated AP site in DNA, thereby increasing the turnover of the DNA N-glycosylase activity. AP lyase activity is stimulated by YBX1. ERCC5/XPG stimulates NTHL1 activity and NTHL1 binding to its DNA substrate. Its function is as follows. Bifunctional DNA N-glycosylase with associated apurinic/apyrimidinic (AP) lyase function that catalyzes the first step in base excision repair (BER), the primary repair pathway for the repair of oxidative DNA damage. The DNA N-glycosylase activity releases the damaged DNA base from DNA by cleaving the N-glycosidic bond, leaving an AP site. The AP-lyase activity cleaves the phosphodiester bond 3' to the AP site by a beta-elimination. Primarily recognizes and repairs oxidative base damage of pyrimidines. Also has 8-oxo-7,8-dihydroguanine (8-oxoG) DNA glycosylase activity. Acts preferentially on DNA damage opposite guanine residues in DNA. Is able to process lesions in nucleosomes without requiring or inducing nucleosome disruption. The protein is Endonuclease III-like protein 1 of Homo sapiens (Human).